Here is a 178-residue protein sequence, read N- to C-terminus: Neuroblastoma suppressor of tumorigenicity 1 (178 aa).

An N-terminal signal peptide occupies residues 1-16 (MLWVLVGAVLPVMLLA). 5 cysteine pairs are disulfide-bonded: C34–C84, C48–C98, C58–C117, C62–C119, and C81–C122. The 90-residue stretch at 34–123 (CEAKNITQIV…IVHCSCQACG (90 aa)) folds into the CTCK domain. The disordered stretch occupies residues 132–178 (NVYVQGEDSPGSQPGPHSHAHPHPGGQTPEPEEPPGAPQVEEEGAED). The segment covering 140–160 (SPGSQPGPHSHAHPHPGGQTP) has biased composition (low complexity).

This sequence belongs to the DAN family. In terms of assembly, homodimer.

Its subcellular location is the secreted. Its function is as follows. Possible candidate as a tumor suppressor gene of neuroblastoma. May play an important role in preventing cells from entering the final stage (G1/S) of the transformation process. The polypeptide is Neuroblastoma suppressor of tumorigenicity 1 (Nbl1) (Mus musculus (Mouse)).